We begin with the raw amino-acid sequence, 52 residues long: ATP synthase F(0) complex subunit 8 (52 aa).

A helical membrane pass occupies residues 10-30; the sequence is LMTHLWAWLMLYLTTQKIKTF.

The protein belongs to the ATPase protein 8 family. As to quaternary structure, component of the ATP synthase complex composed at least of ATP5F1A/subunit alpha, ATP5F1B/subunit beta, ATP5MC1/subunit c (homooctomer), MT-ATP6/subunit a, MT-ATP8/subunit 8, ATP5ME/subunit e, ATP5MF/subunit f, ATP5MG/subunit g, ATP5MK/subunit k, ATP5MJ/subunit j, ATP5F1C/subunit gamma, ATP5F1D/subunit delta, ATP5F1E/subunit epsilon, ATP5PF/subunit F6, ATP5PB/subunit b, ATP5PD/subunit d, ATP5PO/subunit OSCP. ATP synthase complex consists of a soluble F(1) head domain (subunits alpha(3) and beta(3)) - the catalytic core - and a membrane F(0) domain - the membrane proton channel (subunits c, a, 8, e, f, g, k and j). These two domains are linked by a central stalk (subunits gamma, delta, and epsilon) rotating inside the F1 region and a stationary peripheral stalk (subunits F6, b, d, and OSCP).

The protein localises to the mitochondrion membrane. In terms of biological role, subunit 8, of the mitochondrial membrane ATP synthase complex (F(1)F(0) ATP synthase or Complex V) that produces ATP from ADP in the presence of a proton gradient across the membrane which is generated by electron transport complexes of the respiratory chain. ATP synthase complex consist of a soluble F(1) head domain - the catalytic core - and a membrane F(1) domain - the membrane proton channel. These two domains are linked by a central stalk rotating inside the F(1) region and a stationary peripheral stalk. During catalysis, ATP synthesis in the catalytic domain of F(1) is coupled via a rotary mechanism of the central stalk subunits to proton translocation. In vivo, can only synthesize ATP although its ATP hydrolase activity can be activated artificially in vitro. Part of the complex F(0) domain. This is ATP synthase F(0) complex subunit 8 from Lycodon semicarinatus (Ryukyu odd-tooth snake).